The following is a 158-amino-acid chain: SsrA-binding protein (158 aa).

Positions 131-158 (YDKRQTLRERQDKREADRAMSSHRRLGE) are disordered.

Belongs to the SmpB family.

It is found in the cytoplasm. Its function is as follows. Required for rescue of stalled ribosomes mediated by trans-translation. Binds to transfer-messenger RNA (tmRNA), required for stable association of tmRNA with ribosomes. tmRNA and SmpB together mimic tRNA shape, replacing the anticodon stem-loop with SmpB. tmRNA is encoded by the ssrA gene; the 2 termini fold to resemble tRNA(Ala) and it encodes a 'tag peptide', a short internal open reading frame. During trans-translation Ala-aminoacylated tmRNA acts like a tRNA, entering the A-site of stalled ribosomes, displacing the stalled mRNA. The ribosome then switches to translate the ORF on the tmRNA; the nascent peptide is terminated with the 'tag peptide' encoded by the tmRNA and targeted for degradation. The ribosome is freed to recommence translation, which seems to be the essential function of trans-translation. This Clavibacter michiganensis subsp. michiganensis (strain NCPPB 382) protein is SsrA-binding protein.